The following is a 275-amino-acid chain: NAD kinase (275 aa).

Aspartate 66 (proton acceptor) is an active-site residue. Residues 66 to 67, 138 to 139, histidine 168, aspartate 170, 181 to 186, and valine 205 each bind NAD(+); these read DG, NE, and TAYNLS.

The protein belongs to the NAD kinase family. A divalent metal cation is required as a cofactor.

Its subcellular location is the cytoplasm. It carries out the reaction NAD(+) + ATP = ADP + NADP(+) + H(+). In terms of biological role, involved in the regulation of the intracellular balance of NAD and NADP, and is a key enzyme in the biosynthesis of NADP. Catalyzes specifically the phosphorylation on 2'-hydroxyl of the adenosine moiety of NAD to yield NADP. This Halorubrum lacusprofundi (strain ATCC 49239 / DSM 5036 / JCM 8891 / ACAM 34) protein is NAD kinase.